The chain runs to 453 residues: Probable acetylornithine aminotransferase, mitochondrial (453 aa).

An N6-(pyridoxal phosphate)lysine modification is found at Lys302.

The protein belongs to the class-III pyridoxal-phosphate-dependent aminotransferase family. Requires pyridoxal 5'-phosphate as cofactor.

It is found in the mitochondrion matrix. The enzyme catalyses N(2)-acetyl-L-ornithine + 2-oxoglutarate = N-acetyl-L-glutamate 5-semialdehyde + L-glutamate. Its pathway is amino-acid biosynthesis; L-arginine biosynthesis; N(2)-acetyl-L-ornithine from L-glutamate: step 4/4. The polypeptide is Probable acetylornithine aminotransferase, mitochondrial (argD) (Dictyostelium discoideum (Social amoeba)).